The sequence spans 98 residues: Large ribosomal subunit protein uL23 (98 aa).

Belongs to the universal ribosomal protein uL23 family. In terms of assembly, part of the 50S ribosomal subunit. Contacts protein L29, and trigger factor when it is bound to the ribosome.

Its function is as follows. One of the early assembly proteins it binds 23S rRNA. One of the proteins that surrounds the polypeptide exit tunnel on the outside of the ribosome. Forms the main docking site for trigger factor binding to the ribosome. This Gluconacetobacter diazotrophicus (strain ATCC 49037 / DSM 5601 / CCUG 37298 / CIP 103539 / LMG 7603 / PAl5) protein is Large ribosomal subunit protein uL23.